A 462-amino-acid polypeptide reads, in one-letter code: PTS system mannitol-specific cryptic EIICB component (462 aa).

Residues 1-24 (MENKSARAKVQAFGGFLTAMVIPN) are Cytoplasmic-facing. Residues 13-344 (FGGFLTAMVI…LKMEKTVETE (332 aa)) enclose the PTS EIIC type-2 domain. The helical transmembrane segment at 25 to 46 (IGAFIAWGFITALFIPTGWLPN) threads the bilayer. Residues 47–50 (EHFA) are Periplasmic-facing. Residues 51–71 (KIVGPMITYLLPVMIGSTGGH) form a helical membrane-spanning segment. The Cytoplasmic segment spans residues 72–134 (LVGGKRGAVM…AGFEMVINNF (63 aa)). Residues 135-156 (SLGIAGMLLCLLGFEVIGPAVL) traverse the membrane as a helical segment. Topologically, residues 157–165 (IANTFVKEC) are periplasmic. The chain crosses the membrane as a helical span at residues 166–186 (IEALVHAGYLPLLSVINEPAK). Topologically, residues 187-273 (VLFLNNAIDQ…VLMKPLTIIA (87 aa)) are cytoplasmic. Residues 274-293 (MIAGGMSGTWMFNLLDGGLV) form a helical membrane-spanning segment. Residues 294–313 (AGPSPGSIFAYLALTPKGSF) are Periplasmic-facing. Residues 314-335 (LATIAGVTVGTLVSFAITSLIL) traverse the membrane as a helical segment. At 336–462 (KMEKTVETES…FNQLTAEHKH (127 aa)) the chain is on the cytoplasmic side. The region spanning 371–461 (KRIAFVCDAG…LFNQLTAEHK (91 aa)) is the PTS EIIB type-2 domain. Residue Cys-377 is the Phosphocysteine intermediate; for EIIB activity of the active site. Cys-377 carries the post-translational modification Phosphocysteine; by EIIA.

Its subcellular location is the cell inner membrane. It catalyses the reaction D-mannitol(out) + N(pros)-phospho-L-histidyl-[protein] = D-mannitol 1-phosphate(in) + L-histidyl-[protein]. The phosphoenolpyruvate-dependent sugar phosphotransferase system (sugar PTS), a major carbohydrate active transport system, catalyzes the phosphorylation of incoming sugar substrates concomitantly with their translocation across the cell membrane. The enzyme II CmtAB PTS system is involved in D-mannitol transport. The chain is PTS system mannitol-specific cryptic EIICB component (cmtA) from Escherichia coli O157:H7.